The sequence spans 337 residues: Protein-methionine-sulfoxide reductase catalytic subunit MsrP (337 aa).

Residues 1-48 constitute a signal peptide (tat-type signal); the sequence is MLIKIPSRSDCSESEVTSETLYLSRRRLLGASFAGLALASGLPRLGFA. Mo-molybdopterin-binding positions include N94, 97–98, C152, T187, N237, R242, and 253–255; these read YE and SIK.

The protein belongs to the MsrP family. Heterodimer of a catalytic subunit (MsrP) and a heme-binding subunit (MsrQ). Requires Mo-molybdopterin as cofactor. Predicted to be exported by the Tat system. The position of the signal peptide cleavage has not been experimentally proven.

It localises to the periplasm. The catalysed reaction is L-methionyl-[protein] + a quinone + H2O = L-methionyl-(S)-S-oxide-[protein] + a quinol. The enzyme catalyses L-methionyl-[protein] + a quinone + H2O = L-methionyl-(R)-S-oxide-[protein] + a quinol. Functionally, part of the MsrPQ system that repairs oxidized periplasmic proteins containing methionine sulfoxide residues (Met-O), using respiratory chain electrons. Thus protects these proteins from oxidative-stress damage caused by reactive species of oxygen and chlorine generated by the host defense mechanisms. MsrPQ is essential for the maintenance of envelope integrity under bleach stress, rescuing a wide series of structurally unrelated periplasmic proteins from methionine oxidation. The catalytic subunit MsrP is non-stereospecific, being able to reduce both (R-) and (S-) diastereoisomers of methionine sulfoxide. The chain is Protein-methionine-sulfoxide reductase catalytic subunit MsrP from Pseudomonas aeruginosa (strain ATCC 15692 / DSM 22644 / CIP 104116 / JCM 14847 / LMG 12228 / 1C / PRS 101 / PAO1).